Reading from the N-terminus, the 229-residue chain is Ribonuclease 3 (229 aa).

The RNase III domain maps to 7-132 (LKAFEGRIGH…VIAAVYLDAG (126 aa)). Glu-45 serves as a coordination point for Mg(2+). Asp-49 is an active-site residue. Residues Asp-118 and Glu-121 each coordinate Mg(2+). Glu-121 is a catalytic residue. In terms of domain architecture, DRBM spans 157-226 (DAKTALQEWA…ARALLARMEA (70 aa)).

This sequence belongs to the ribonuclease III family. In terms of assembly, homodimer. Mg(2+) is required as a cofactor.

It localises to the cytoplasm. It carries out the reaction Endonucleolytic cleavage to 5'-phosphomonoester.. Functionally, digests double-stranded RNA. Involved in the processing of primary rRNA transcript to yield the immediate precursors to the large and small rRNAs (23S and 16S). Processes some mRNAs, and tRNAs when they are encoded in the rRNA operon. Processes pre-crRNA and tracrRNA of type II CRISPR loci if present in the organism. This Cereibacter sphaeroides (strain ATCC 17029 / ATH 2.4.9) (Rhodobacter sphaeroides) protein is Ribonuclease 3.